Reading from the N-terminus, the 132-residue chain is Small ribosomal subunit protein uS8 (132 aa).

This sequence belongs to the universal ribosomal protein uS8 family. In terms of assembly, part of the 30S ribosomal subunit. Contacts proteins S5 and S12.

Functionally, one of the primary rRNA binding proteins, it binds directly to 16S rRNA central domain where it helps coordinate assembly of the platform of the 30S subunit. The chain is Small ribosomal subunit protein uS8 from Caulobacter vibrioides (strain ATCC 19089 / CIP 103742 / CB 15) (Caulobacter crescentus).